The chain runs to 106 residues: Nucleoid-associated protein RPB_0667 (106 aa).

This sequence belongs to the YbaB/EbfC family. Homodimer.

It localises to the cytoplasm. It is found in the nucleoid. In terms of biological role, binds to DNA and alters its conformation. May be involved in regulation of gene expression, nucleoid organization and DNA protection. The chain is Nucleoid-associated protein RPB_0667 from Rhodopseudomonas palustris (strain HaA2).